A 167-amino-acid chain; its full sequence is UPF0114 protein in repA1-repA2 intergenic region (167 aa).

The next 3 membrane-spanning stretches (helical) occupy residues 15–35 (LMFP…LKFF), 53–73 (LVLV…LVMV), and 136–156 (IMLC…MAYI).

The protein belongs to the UPF0114 family.

It localises to the cell membrane. The sequence is that of UPF0114 protein in repA1-repA2 intergenic region from Buchnera aphidicola subsp. Diuraphis noxia.